The following is a 784-amino-acid chain: Protein-tyrosine-phosphatase MKP1 (784 aa).

Disordered stretches follow at residues 1 to 73 (MVGR…NSKA) and 94 to 118 (PKAG…TGER). Residues 22–34 (WRSASWSASRTAS) are compositionally biased toward low complexity. Phosphothreonine is present on residues Thr-64 and Thr-109. A Tyrosine-protein phosphatase domain is found at 149-291 (ECSKVADHIY…LLQCQKRVHA (143 aa)). The Phosphocysteine intermediate role is filled by Cys-235. Residue 235–241 (CCQGVSR) coordinates substrate. Residues 488-586 (HSSGSPSSTT…ASPSLAERRG (99 aa)) are disordered. 2 stretches are compositionally biased toward low complexity: residues 489 to 510 (SSGS…FLSP) and 521 to 553 (SLKS…LSLL). Over residues 554 to 577 (PSQTSPKESRGVNTFLQPSPNRKA) the composition is skewed to polar residues. A phosphoserine mark is found at Ser-558 and Ser-572.

Interacts with MPK6. May interact with MPK3 and MPK4. Phosphorylated on threonine and serine residues by MPK6.

It is found in the cytoplasm. The protein localises to the cytosol. It catalyses the reaction O-phospho-L-tyrosyl-[protein] + H2O = L-tyrosyl-[protein] + phosphate. Its function is as follows. Protein-tyrosine-phosphatase that acts as a negative regulator of MPK6 and MPK3 signaling by dephosphorylating and repressing MPK6 and MPK3. Modulates defense response by repressing salicylic acid (SA) production, camalexin biosynthesis and SNC1-mediated responses. Acts as a negative regulator of MPK6-mediated pathogen-associated molecular pattern (PAMP) responses, including MPK6 and MPK3 activation, accumulation of extracellular reactive oxygen species and inhibition of seedling growth. Involved in UV-B stress tolerance. May be involved in salt and genotoxic stress responses. The chain is Protein-tyrosine-phosphatase MKP1 (MKP1) from Arabidopsis thaliana (Mouse-ear cress).